Reading from the N-terminus, the 52-residue chain is UPF0391 membrane protein XCV0245 (52 aa).

The next 2 membrane-spanning stretches (helical) occupy residues 5 to 25 (AIIF…GIAG) and 27 to 47 (ATNI…ISMF).

Belongs to the UPF0391 family.

The protein localises to the cell membrane. This Xanthomonas euvesicatoria pv. vesicatoria (strain 85-10) (Xanthomonas campestris pv. vesicatoria) protein is UPF0391 membrane protein XCV0245.